A 45-amino-acid chain; its full sequence is Keratin-associated protein 22-2 (45 aa).

This sequence belongs to the KRTAP type 20 family. Interacts with hair keratins.

In terms of biological role, in the hair cortex, hair keratin intermediate filaments are embedded in an interfilamentous matrix, consisting of hair keratin-associated proteins (KRTAP), which are essential for the formation of a rigid and resistant hair shaft through their extensive disulfide bond cross-linking with abundant cysteine residues of hair keratins. The matrix proteins include the high-sulfur and high-glycine-tyrosine keratins. This Homo sapiens (Human) protein is Keratin-associated protein 22-2 (KRTAP22-2).